Here is a 1341-residue protein sequence, read N- to C-terminus: DNA-directed RNA polymerase subunit beta (1341 aa).

It belongs to the RNA polymerase beta chain family. In terms of assembly, the RNAP catalytic core consists of 2 alpha, 1 beta, 1 beta' and 1 omega subunit. When a sigma factor is associated with the core the holoenzyme is formed, which can initiate transcription.

The enzyme catalyses RNA(n) + a ribonucleoside 5'-triphosphate = RNA(n+1) + diphosphate. DNA-dependent RNA polymerase catalyzes the transcription of DNA into RNA using the four ribonucleoside triphosphates as substrates. In Photobacterium profundum (strain SS9), this protein is DNA-directed RNA polymerase subunit beta.